Reading from the N-terminus, the 216-residue chain is Protein Syd (216 aa).

The protein belongs to the Syd family.

The protein localises to the cell inner membrane. Its function is as follows. Interacts with the SecY protein in vivo. May bind preferentially to an uncomplexed state of SecY, thus functioning either as a chelating agent for excess SecY in the cell or as a regulatory factor that negatively controls the translocase function. This chain is Protein Syd, found in Shewanella baltica (strain OS223).